A 214-amino-acid chain; its full sequence is 7-cyano-7-deazaguanine synthase (214 aa).

F10–L20 lines the ATP pocket. Residues C184, C193, C196, and C199 each contribute to the Zn(2+) site.

Belongs to the QueC family. As to quaternary structure, homodimer. Zn(2+) is required as a cofactor.

It carries out the reaction 7-carboxy-7-deazaguanine + NH4(+) + ATP = 7-cyano-7-deazaguanine + ADP + phosphate + H2O + H(+). Its pathway is purine metabolism; 7-cyano-7-deazaguanine biosynthesis. Its function is as follows. Catalyzes the ATP-dependent conversion of 7-carboxy-7-deazaguanine (CDG) to 7-cyano-7-deazaguanine (preQ(0)). The protein is 7-cyano-7-deazaguanine synthase of Exiguobacterium sp. (strain ATCC BAA-1283 / AT1b).